The chain runs to 463 residues: Serine/threonine-protein kinase tricornered (463 aa).

One can recognise a Protein kinase domain in the interval 93 to 394 (FEALKVIGRG…LEDLKSVPFF (302 aa)). Residues 99–107 (IGRGAFGEV) and lysine 122 each bind ATP. The tract at residues 119-180 (YAMKVLRKAD…EFLPGGDMMT (62 aa)) is interaction with mats and Mob1. Residue aspartate 216 is the Proton acceptor of the active site. Serine 292 is modified (phosphoserine). The AGC-kinase C-terminal domain maps to 395–463 (RGVDWEHIRE…YKRFEVRNLE (69 aa)). Position 453 is a phosphothreonine (threonine 453).

The protein belongs to the protein kinase superfamily. AGC Ser/Thr protein kinase family. Interacts with, and is activated by, Mob1. The cofactor is Mg(2+). As to expression, expressed in the peripheral and central nervous system (at protein level). Expressed in the wing imaginal disk.

It is found in the cytoplasm. The protein localises to the nucleus. It catalyses the reaction L-seryl-[protein] + ATP = O-phospho-L-seryl-[protein] + ADP + H(+). The catalysed reaction is L-threonyl-[protein] + ATP = O-phospho-L-threonyl-[protein] + ADP + H(+). Its activity is regulated as follows. Activated by fry. Its function is as follows. Serine/threonine-protein kinase involved in controlling cell structure and proliferation of a variety of polarized outgrowths including epidermal hairs, bristles, arista laterals, and dendrites. Together with fry, maintains the integrity of epidermal hairs and is an essential component of the signaling pathway regulating dendritic branching of sensory neurons. Reduces neurite outgrowth by phosphorylating pav, thereby inhibiting its function in microtubule-microtubule sliding. The protein is Serine/threonine-protein kinase tricornered of Drosophila melanogaster (Fruit fly).